The sequence spans 871 residues: Pentatricopeptide repeat-containing protein At3g06920 (871 aa).

PPR repeat units follow at residues 97 to 131 (CPES…GFGP), 132 to 166 (SVNT…KFRP), 167 to 201 (AFSA…GYEP), 202 to 236 (TVHL…SLDA), 237 to 271 (DIVL…GLKP), 272 to 306 (DEVT…RRVP), 307 to 341 (CTYA…GSIP), 342 to 372 (SVIA…MKKD), 376 to 410 (NLST…GLFP), 411 to 445 (NVRT…VCTP), 446 to 480 (DEIT…DCRT), 481 to 515 (NSIV…NCSP), 516 to 550 (DLQL…RFVP), 551 to 585 (DARS…GCVL), 586 to 620 (DTRA…GFEP), 621 to 655 (TVVT…RIEL), 656 to 690 (NVVI…GLTP), 691 to 725 (NLYT…KCTP), 726 to 760 (NQVT…GMKP), 761 to 795 (STIS…GGVP), and 796 to 830 (DSAC…GLPI).

This sequence belongs to the PPR family. P subfamily.

The polypeptide is Pentatricopeptide repeat-containing protein At3g06920 (Arabidopsis thaliana (Mouse-ear cress)).